The primary structure comprises 625 residues: Grainyhead-like protein 2 homolog (625 aa).

Disordered regions lie at residues 1-24 (MSQE…PPFN), 82-112 (VSKA…GGEN), and 428-453 (EERK…SDGK). The transcription activation stretch occupies residues 1–93 (MSQESDNNKR…KASDSQEDQE (93 aa)). Polar residues-rich tracts occupy residues 98 to 109 (LGTSEAQSNLSG) and 440 to 451 (QASQTQCNSSSD). The 239-residue stretch at 244 to 482 (SSGTFQYTLE…DLHSQPVLFI (239 aa)) folds into the Grh/CP2 DB domain.

It belongs to the grh/CP2 family. Grainyhead subfamily. As to quaternary structure, homodimer, also forms heterodimers with GRHL1 or GRHL3. Expressed in keratinocytes (at protein level). Highly expressed in placenta, prostate, brain and kidney. Lower-level expression in a variety of epithelial tissues such as thymus, lung, salivary gland, mammary gland and digestive tract. Expressed in the cochlear. Expressed in corneal epithelial cells, but not in the endothelium or stroma.

The protein resides in the nucleus. It is found in the membrane. Transcription factor playing an important role in primary neurulation and in epithelial development. Binds directly to the consensus DNA sequence 5'-AACCGGTT-3' acting as an activator and repressor on distinct target genes. During embryogenesis, plays unique and cooperative roles with GRHL3 in establishing distinct zones of primary neurulation. Essential for closure 3 (rostral end of the forebrain), functions cooperatively with GRHL3 in closure 2 (forebrain/midbrain boundary) and posterior neuropore closure. Regulates epithelial morphogenesis acting as a target gene-associated transcriptional activator of apical junctional complex components. Up-regulates of CLDN3 and CLDN4, as well as of RAB25, which increases the CLDN4 protein and its localization at tight junctions. Comprises an essential component of the transcriptional machinery that establishes appropriate expression levels of CLDN4 and CDH1 in different types of epithelia. Exhibits functional redundancy with GRHL3 in epidermal morphogenetic events and epidermal wound repair. In lung, forms a regulatory loop with NKX2-1 that coordinates lung epithelial cell morphogenesis and differentiation. In keratinocytes, plays a role in telomerase activation during cellular proliferation, regulates TERT expression by binding to TERT promoter region and inhibiting DNA methylation at the 5'-CpG island, possibly by interfering with DNMT1 enzyme activity. In addition, impairs keratinocyte differentiation and epidermal function by inhibiting the expression of genes clustered at the epidermal differentiation complex (EDC) as well as GRHL1 and GRHL3 through epigenetic mechanisms. The chain is Grainyhead-like protein 2 homolog (GRHL2) from Homo sapiens (Human).